A 104-amino-acid polypeptide reads, in one-letter code: Protein U9 (104 aa).

The protein is Protein U9 (U9) of Homo sapiens (Human).